Here is a 753-residue protein sequence, read N- to C-terminus: A-kinase anchor protein 200 (753 aa).

Disordered regions lie at residues 1 to 345 (MGKA…QIEA), 462 to 482 (VETRSSSPPPPLPKSPPPSRV), 531 to 604 (TEQE…IDPA), 620 to 641 (VEKETGSISSNVAESSSVSDEQ), and 658 to 684 (VEETTEQETSDQQVISEEAHSDNDKEN). Residue Gly-2 is the site of N-myristoyl glycine attachment. Composition is skewed to basic and acidic residues over residues 8 to 38 (RSIDITTDPKKVGEGDEVAGKVEKIDVDQKT) and 59 to 77 (AVEKKETEEHSENDKDLTT). The span at 81 to 93 (AAVAEGGDAVAET) shows a compositional bias: low complexity. The segment at 119 to 148 (KSKSKKDKVKKKWSFRSISFGKKDKQKPAK) is F-actin binding. Basic residues predominate over residues 120–132 (SKSKKDKVKKKWS). Phosphoserine occurs at positions 132, 135, and 137. Over residues 139 to 151 (GKKDKQKPAKSEE) the composition is skewed to basic and acidic residues. Over residues 152-181 (ATSPTSGTTSPTTAEAEAAPAGDAAVAEPS) the composition is skewed to low complexity. Over residues 216 to 227 (EQEKQANGETEK) the composition is skewed to basic and acidic residues. Over residues 246 to 262 (EPATVTATESNTTATEE) the composition is skewed to low complexity. The tract at residues 345-725 (ASSEVIETVT…AEQEGESNNK (381 aa)) is interaction with PKA-R2. The segment covering 468 to 480 (SPPPPLPKSPPPS) has biased composition (pro residues). The span at 532–544 (EQEKQQEEAKVDS) shows a compositional bias: basic and acidic residues. The segment covering 545-561 (VPETIEESSSTVVVEEV) has biased composition (low complexity). Over residues 578–594 (DVQKPIEDQDTPDEKES) the composition is skewed to basic and acidic residues. The segment covering 626–638 (SISSNVAESSSVS) has biased composition (low complexity). The segment covering 674 to 684 (EEAHSDNDKEN) has biased composition (basic and acidic residues).

Homodimer. Interacts with Cam; interaction is calcium-dependent and is inhibited by PKC-mediated phosphorylation of Akap200. Interacts with N/Notch; the interaction stabilizes N/Notch protein levels by preventing Cbl-mediated ubiquitination and subsequent lysosomal degradation of N/Notch. Interacts with Pka-R2. Binds to F-actin; interaction is independent of myristoylation, but is inhibited by Akap200 phosphorylation and Cam binding. Isoform B: Does not bind to Pka-R2. Myristoylated; myristoylation promotes accumulation at the cell periphery. Post-translationally, phosphorylated; phosphorylation prevents binding to F-actin and Cam. As to expression, detected in the brain in both neurons and glia (including perineurial glia); specifically in the neuronal nuclei in the cortex and synaptic neuropil (at protein level). Detected in germline cells, somatic follicle cells and outer rim of the ring canals during oogenesis (at protein level). Isoform A: Detected in the adult (at protein level). Isoform B: Detected in the adult with higher levels in the head (at protein level).

It is found in the cytoplasm. It localises to the cytosol. Its subcellular location is the cell membrane. The protein localises to the cytoskeleton. In terms of biological role, scaffolding protein involved in the regulation of PKA signaling and anchoring to the actin cytoskeleton integrating signals propagated by cAMP, diacylglycerol and calcium. Contributes to the maintenance and regulation of cytoskeletal structures in germline via PKA-mediated signaling. As part of ethanol response in the glia, mediates ethanol-induced structural remodeling of actin cytoskeleton and perineurial membrane topology by anchoring PKA to the membrane of perineurial glia. In specific tissues such as eye and thorax, promotes N/Notch protein stability by inhibiting Cbl-mediated ubiquitination and lysosomal degradation pathway of N/Notch in a PKA-independent way. In the circadian brain neurons evening cells (E-cells), might have a role in circadian pacemaker synchronization by playing a redundant role in signaling downstream of the G protein-couple receptor Pdfr. This is A-kinase anchor protein 200 from Drosophila melanogaster (Fruit fly).